The sequence spans 339 residues: MRVYYDRDADLNLIKSKKVAIIGYGSQGRAHALNLKDSGAQNVAIALKSGSATAKKAEADGFKVMTVAEAAAWADLMMMATPDELQADIYKAEIAGNIRDGAAIAFAHGLNVHFGLIEPKASVDVVMIAPKGPGHTVRGEYQKGGGVPCLVAVHQDASGNALDLALSYACGVGGGRSGIIETNFKEECETDLFGEQVVLCGGLVELIRAGFETLVEAGYAPEMAYFECLHEVKLIVDLIYEGGIANMNYSISNTAEWGEYVTGPRIITEETKAEMKRVLKDIQTGKFTSEWMQEYRSGAARFKGIRRVNDAHQIEEVGAKLRGMMPWIGKNKLVDKAKN.

Residues M1–T182 enclose the KARI N-terminal Rossmann domain. Residues Y24 to Q27, K48, S51, T53, and D83 to Q86 contribute to the NADP(+) site. Residue H108 is part of the active site. NADP(+) is bound at residue G134. Residues N183–I328 enclose the KARI C-terminal knotted domain. Mg(2+) is bound by residues D191, E195, E227, and E231. A substrate-binding site is contributed by S252.

Belongs to the ketol-acid reductoisomerase family. Requires Mg(2+) as cofactor.

The catalysed reaction is (2R)-2,3-dihydroxy-3-methylbutanoate + NADP(+) = (2S)-2-acetolactate + NADPH + H(+). It carries out the reaction (2R,3R)-2,3-dihydroxy-3-methylpentanoate + NADP(+) = (S)-2-ethyl-2-hydroxy-3-oxobutanoate + NADPH + H(+). Its pathway is amino-acid biosynthesis; L-isoleucine biosynthesis; L-isoleucine from 2-oxobutanoate: step 2/4. The protein operates within amino-acid biosynthesis; L-valine biosynthesis; L-valine from pyruvate: step 2/4. In terms of biological role, involved in the biosynthesis of branched-chain amino acids (BCAA). Catalyzes an alkyl-migration followed by a ketol-acid reduction of (S)-2-acetolactate (S2AL) to yield (R)-2,3-dihydroxy-isovalerate. In the isomerase reaction, S2AL is rearranged via a Mg-dependent methyl migration to produce 3-hydroxy-3-methyl-2-ketobutyrate (HMKB). In the reductase reaction, this 2-ketoacid undergoes a metal-dependent reduction by NADPH to yield (R)-2,3-dihydroxy-isovalerate. The polypeptide is Ketol-acid reductoisomerase (NADP(+)) (Sinorhizobium medicae (strain WSM419) (Ensifer medicae)).